A 935-amino-acid chain; its full sequence is Coiled-coil domain-containing protein 66 (935 aa).

Positions 76-96 are enriched in polar residues; that stretch reads LDTSQAKPENSRLTFSPSTDK. Residues 76-103 are disordered; sequence LDTSQAKPENSRLTFSPSTDKQYSEKDS. Thr-114 carries the post-translational modification Phosphothreonine. Ser-366 is modified (phosphoserine). Positions 462–555 form a coiled coil; the sequence is LEHQKAIMAQ…EQRIRELAQK (94 aa). 3 disordered regions span residues 470-491, 577-602, and 738-794; these read AQVE…KEEQ, TISS…DTGV, and ENLS…RTQQ. Residues 473–491 are compositionally biased toward basic and acidic residues; it reads EENRRKKRLEEEQRKKEEQ. Positions 567–935 are mediates localization to cilia, centrosomes and spindle microtubules and the interaction with PCM1, CEP290, CEP104 and CSPP1; the sequence is GAQVDYKAFT…NQEDNFSSSF (369 aa). Residues 590–602 are compositionally biased toward polar residues; that stretch reads DTSTASPKKDTGV. A Phosphoserine modification is found at Ser-595. Residues 752 to 782 are compositionally biased toward basic and acidic residues; the sequence is SHRETESESRLHLIKKVEEPLKTPSVSKERF. The span at 783–794 shows a compositional bias: polar residues; sequence QTSPAVKNRTQQ.

In terms of assembly, homodimer; disulfide-linked. Interacts with CEP290. Interacts with PCM1. Interacts with ARMC9, TOGARAM1, CSPP1 and CEP104. Interacts with CDK5RAP2, CEP152, CEP192, TBG1 and PRC1. As to expression, widely expressed. Expressed in retina by rod photoreceptors but also detected in outer plexiform and ganglion cell layers (at protein level).

The protein resides in the cytoplasm. It localises to the cytoskeleton. It is found in the microtubule organizing center. Its subcellular location is the centrosome. The protein localises to the centriolar satellite. The protein resides in the cell projection. It localises to the cilium. It is found in the cilium basal body. Its subcellular location is the cilium axoneme. The protein localises to the photoreceptor inner segment. The protein resides in the photoreceptor outer segment. Functionally, microtubule-binding protein required for ciliogenesis. May function in ciliogenesis by mediating the transport of proteins like BBS4 to the cilium, but also through the organization of the centriolar satellites. Required for the assembly of signaling-competent cilia with proper structure and length. Mediates this function in part by regulating transition zone assembly and basal body recruitment of the IFT-B complex. Cooperates with the ciliopathy proteins CSPP1 and CEP104 during cilium length regulation. Plays two important roles during cell division. First, is required for mitotic progression via regulation of spindle assembly, organization and orientation, levels of spindle microtubules (MTs), kinetochore-fiber integrity, and chromosome alignment. Second, functions during cytokinesis in part by regulating assembly and organization of central spindle and midbody MTs. Plays a role in retina morphogenesis and/or homeostasis. This Mus musculus (Mouse) protein is Coiled-coil domain-containing protein 66.